The sequence spans 245 residues: Neurovirulence factor ICP34.5 (245 aa).

A compositionally biased stretch (basic residues) spans 1–15 (MARRRRRHRGPRRPR). The tract at residues 1–17 (MARRRRRHRGPRRPRPP) is required for nucleolar localization. Disordered stretches follow at residues 1–122 (MARR…PFRL) and 143–172 (RRAG…PATP). The span at 25-36 (TAQSQVTSTPNS) shows a compositional bias: polar residues. Residues 67–77 (ASDDDDDDDWP) show a composition bias toward acidic residues. 2 stretches are compositionally biased toward pro residues: residues 78–87 (DSPPPEPAPE) and 113–122 (SHPPSRPFRL). Positions 122 to 131 (LPPRLALRLR) match the Nuclear export signal motif. Repeat copies occupy residues 155–157 (ATP), 158–160 (ATP), 161–163 (ATP), 164–166 (ATP), 167–169 (ATP), and 170–172 (ATP). The tract at residues 155 to 172 (ATPATPATPATPATPATP) is 6 X 3 AA tandem repeats of A-T-P. A compositionally biased stretch (low complexity) spans 158–172 (ATPATPATPATPATP). Positions 172–185 (PARVRFSPHVRVRH) are binding to PP1CA. The segment at 172–185 (PARVRFSPHVRVRH) is interaction with host PPP1CA. An important for interferon resistance region spans residues 187-245 (VVWASAARLARRGSWARERADRARFRRRVAEAEAVIGPCLGPEARARALARGAGPANSV). The short motif at 197–215 (RRGSWARERADRARFRRRV) is the Bipartite nuclear localization signal element. Residues 215 to 230 (VAEAEAVIGPCLGPEA) are interaction with host EIF2S1/EIF-2ALPHA.

It belongs to the PPP1R15 family. In terms of assembly, interacts with host PPP1CA to form a high-molecular-weight complex that dephosphorylates EIF2S1/eIF-2alpha. Interacts with host EIF2S1/eIF-2alpha; this interaction is crucial for the specific dephosphorylation of EIF2S1/eIF-2alpha by PPP1CA. Binds to proliferating cell nuclear antigen (PCNA), which may release host cells from growth arrest and facilitate viral replication. Interacts (via N-terminus) with host C1QBP and PRKCA. Interacts with protein UL31. Interacts with host TBK1. Interacts with host STING/TMEM173; this interaction inhibits the intracellular DNA sensing pathway. Interacts with host BECN1; this interaction modulates host autophagy.

The protein resides in the host cytoplasm. It is found in the host nucleus. Its subcellular location is the host nucleolus. It localises to the virion. Inhibits the establishment of the immune response and of the integrated stress response (ISR) in the infected cell. Plays essential roles in viral nuclear egress to mediate capsid transit across the nuclear membrane. Facilitates nuclear egress cooperatively with host C1QBP and protein kinase C/PKC to induce lamin A/C phosphorylation and subsequent reorganization. In turn, lamina disassembles and nuclear egress occurs. Recruits the serine/threonine protein phosphatase PPP1CA/PP1-alpha to dephosphorylate the translation initiation factor EIF2S1/eIF-2alpha, thereby couteracting the host shutoff of protein synthesis involving double-stranded RNA-dependent protein kinase EIF2AK2/PKR. In turn, controls host IRF3 activation and subsequently inhibits host interferon response. Controls the DNA sensing pathway by interacting with and inhibiting host STING/TMEM173. Also down-modulates the host MHC class II proteins cell surface expression. Acts as a neurovirulence factor that has a profound effect on the growth of the virus in central nervous system tissue, by interacting with host BECN1 and thereby antagonizing the host autophagy response. This is Neurovirulence factor ICP34.5 (RL1) from Homo sapiens (Human).